A 109-amino-acid polypeptide reads, in one-letter code: MSAQPVDIQIFGRALRVNCPPEQLDALNQAAEDLNQRLQDLKVRTRVTNTEQLVFIAALNVCHELAQERLKTRDYAANMEQRIRMLQQTIEQALLEQGRITERPGTSFE.

Positions 21–99 form a coiled coil; it reads PEQLDALNQA…IEQALLEQGR (79 aa).

It belongs to the ZapA family. Type 1 subfamily. As to quaternary structure, homodimer. Interacts with FtsZ.

The protein resides in the cytoplasm. In terms of biological role, activator of cell division through the inhibition of FtsZ GTPase activity, therefore promoting FtsZ assembly into bundles of protofilaments necessary for the formation of the division Z ring. It is recruited early at mid-cell but it is not essential for cell division. This Edwardsiella ictaluri (strain 93-146) protein is Cell division protein ZapA.